A 399-amino-acid chain; its full sequence is Phosphopentomutase (399 aa).

Mn(2+)-binding residues include aspartate 10, aspartate 296, histidine 301, aspartate 337, histidine 338, and histidine 349.

It belongs to the phosphopentomutase family. The cofactor is Mn(2+).

Its subcellular location is the cytoplasm. It catalyses the reaction 2-deoxy-alpha-D-ribose 1-phosphate = 2-deoxy-D-ribose 5-phosphate. The enzyme catalyses alpha-D-ribose 1-phosphate = D-ribose 5-phosphate. It participates in carbohydrate degradation; 2-deoxy-D-ribose 1-phosphate degradation; D-glyceraldehyde 3-phosphate and acetaldehyde from 2-deoxy-alpha-D-ribose 1-phosphate: step 1/2. Functionally, isomerase that catalyzes the conversion of deoxy-ribose 1-phosphate (dRib-1-P) and ribose 1-phosphate (Rib-1-P) to deoxy-ribose 5-phosphate (dRib-5-P) and ribose 5-phosphate (Rib-5-P), respectively. The chain is Phosphopentomutase from Idiomarina loihiensis (strain ATCC BAA-735 / DSM 15497 / L2-TR).